The following is a 149-amino-acid chain: Large ribosomal subunit protein uL16c (149 aa).

Belongs to the universal ribosomal protein uL16 family. As to quaternary structure, part of the 50S ribosomal subunit.

Its subcellular location is the plastid. It is found in the organellar chromatophore. The polypeptide is Large ribosomal subunit protein uL16c (rpl16) (Paulinella chromatophora).